Reading from the N-terminus, the 1763-residue chain is MSQTLSFVLKTHSVRKDFVHSVKLTLARRRDLQYIYNKLSRTIRAEACPSCASYDVCPNCTSGDVPDDGSSTMSIPSWEDVTKSSTYSLLLSEDTSDELCPEDLVNVAAHIRKALSTQSHPANAEMCKEQLTFLLVMAEAMLPQRSRASIPLHQQHTAARLEWREKFFSKPLDFLLERVGVSKDILQTTAIWKIILEKACYCKSYGEQWFTAAKQKLREMKNFESDTLKPLIGGFIDGLRFLTVDNPNPMGFLPKLIGLVKPLNLAMIIDNHENTISGWIITLTAIMELYNITECTIDIITSVITAFYDKIGKATKFYSCVKALFTGFRSEDVANSFWYMAAAILCYLITGLIPNNGRFSKIKACLAGATTLVSGIVATQKLAAMFATWNSESIVNELSARTVALSELNNPTTTSDTDSVERLLELAKILHEEIKIHTLNPIMQSYNPILRNLMSTLDGVITSCNKRKAIARKRQVPVCYILTGPPGCGKTTAAQALAKKLSDQEPSVINLDVDHHDTYTGNEVCIIDEFDSSDKVDYANFVIGMVNSAPMVLNCDMLENKGKLFTSKYIIMTSNSETPVKPSSKRAGAFYRRVTIIDVTNPFVESHKRARPGTSVPRSCYKKNFSHLSLAKRGAECWCKEYVLDPKGLQHQSMKAPPPTFLNIDSLAQTMKQDFLLKNMAFEAEDGCAEHRYGFVCQQEEVETVRRLLNAVRARMNATFTVCVGPETSHSIGCTAHVLTPNETFNGKKFVVSRCNEASLSALEGNCVKSALGVCMSDKDLTHLCHFIKGKIVNDSVRLDELPANQHVVTVNSVFDLAWAVRRHLTLAGQFQAIRAAYDVLTVPDKIPAMLRHWMDETSFSDDHVVTQFVTPGGIVILESCGGARIWALGRNVIRAGGVTATPTGGCVRLMGLSAPTMPWSEIFRELFSLLGRIWSSVKVSALVLTALGMYASRFRPKSEAKGKTKLKIGTYRGRGVALTDDEYDEWREHNASRKLDLSVEDFLMLRHRAALGADDNDAVKFRSWWNSRTKMANDYEDVTVIGKGGVKHEKIRTNTLKAVDRGYDVSFAEESGPGTKFHKNAIGSVTDVCGEHKGYCIHMGHGVYASVAHVVKGDSFFLGERIFDLKTNGEFCCFRSTKILPSAAPFFSGKPTRDPWGSPVATEWKPKMYTTTSGKILGCFATTSTETHPGDCGLPYIDDNGRVTGLHTGSGGPKTPSAKLVVPYVHIDMKTKSVTAQKYDVTKPDISYKGLICKQLDEIRIIPKGTRLHVSPAHTEDYQECSHQPASLGSGDPRCPKSLTAIVVDSLKPYCENVEGPPHDVLHRVQKMLIDHLSGFVPMNISSETSMLSAFHKLNHDTSCGPYLGGRKKDHMANGEPDKQLLDLLSAKWKLATQGIALPHEYTIGLKDELRPVEKVSEGKRRMIWGCDVGVATVCAAAFKGVSDAITANHQYGPIQVGINMDSPSVEALFQRIKSAAKVFAVDYSKWDSTQSPRVSAASIDILRYFSDRSPIVDSASNTLKSPPVAIFNGVAVKVSSGLPSGMPLTSVINSLNHCLYVGCAILQSLEAKAIPVTWNLFSTFDIMTYGDDGVYMFPIMYASISDQIFGNLSSYGLKPTRVDKSVGAIEPIDPDSVVFLKRTITRTPQGIRGLLDRSSIIRQFYYIKGENSDDWKSPPKHIDPTSRGQQLWNACLYASQHGLEFFNKVYRLAERAVEYEELHFEPPTYASALDHYNSQFNGVEARSDQIDSSGMTALHCDVFEV.

Positions 458–614 (DGVITSCNKR…ESHKRARPGT (157 aa)) constitute an SF3 helicase domain. 484-491 (GPPGCGKT) is an ATP binding site. Residues 981–986 (DDEYDE) form an acidic region. Residue Tyr984 is modified to O-(5'-phospho-RNA)-tyrosine. Residue Thr1040 is modified to Phosphothreonine. Position 1067 is a phosphoserine (Ser1067). Residues 1073–1229 (GPGTKFHKNA…KLVVPYVHID (157 aa)) form the Peptidase C24 domain. Catalysis depends on for 3CLpro activity residues His1110, Glu1131, and Cys1193. Positions 1478-1603 (AKVFAVDYSK…MFPIMYASIS (126 aa)) constitute a RdRp catalytic domain.

In terms of assembly, homodimer. Interacts with NTPase, protein p30 and protease-polymerase p76. As to quaternary structure, interacts with capsid protein VP1 and protease-polymerase p76. Interacts with host IEF4e; this interaction plays a role in translation of viral proteins. Homooligomer. Interacts with Vpg, protein p32 and may interact with capsid protein VP1. In terms of processing, specific enzymatic cleavages in vivo yield mature proteins. Pro-Pol is first autocatalytically cleaved, then processes the whole polyprotein. VPg is uridylylated by the polymerase and is covalently attached to the 5'-end of the polyadenylated genomic and subgenomic RNAs. This uridylylated form acts as a nucleotide-peptide primer for the polymerase.

It is found in the host endoplasmic reticulum membrane. The catalysed reaction is a ribonucleoside 5'-triphosphate + H2O = a ribonucleoside 5'-diphosphate + phosphate + H(+). The enzyme catalyses RNA(n) + a ribonucleoside 5'-triphosphate = RNA(n+1) + diphosphate. It carries out the reaction Endopeptidase with a preference for cleavage when the P1 position is occupied by Glu-|-Xaa and the P1' position is occupied by Gly-|-Yaa.. Together with NTPase and NS4, initiates the formation of the replication complex. Induces the proliferation of the host smooth ER membranes forming long tubular structures. These remodeled membranes probably form the viral factories that contain the replication complex. In terms of biological role, displays NTPase activity, but no helicase activity. Induces the formation of convoluted membranes derived from the host ER. These remodeled membranes probably form the viral factories that contain the replication complex. Together with NS2 and NS4, initiates the formation of the replication complex. Functionally, probable key protein responsible for the formation of membrane alterations by the virus. Induces the formation of convoluted membranes derived from the host ER. These remodeled membranes probably form the viral factories that contain the replication complex. Together with NS2 and NTPase, initiates the formation of the replication complex. Its function is as follows. Viral genome-linked protein is covalently linked to the 5'-end of the positive-strand, negative-strand genomic RNAs and subgenomic RNA. Acts as a genome-linked replication primer. May recruit ribosome to viral RNA thereby promoting viral proteins translation. Interacts with host translation initiation complex to allow the translation of viral proteins. Protease-polymerase p76 processes the polyprotein: Pro-Pol is first released by autocleavage, then all other proteins are cleaved. Cleaves host translation initiation factor eIF4G1, eIF4G2 and PABP1 thereby inducing a shutdown of host protein synthesis. This shutdown may not prevent viral mRNA from being translated since viral Vpg replaces the cap. It is also an RNA-directed RNA polymerase which replicates genomic and antigenomic viral RNA by recognizing specific signals. Also transcribes a subgenomic mRNA by initiating RNA synthesis internally on antigenomic RNA. This sgRNA codes for structural proteins. Catalyzes the covalent attachment VPg with viral RNAs. Cleaves host G3BP1 thereby preventing the assembly of host stress granules. In Felidae (cat family), this protein is Genome polyprotein.